We begin with the raw amino-acid sequence, 228 residues long: L-ribulose-5-phosphate 4-epimerase UlaF (228 aa).

Residues 26 to 27, 43 to 44, and 72 to 73 contribute to the substrate site; these read GN, SG, and SS. Residues aspartate 74, histidine 93, and histidine 95 each contribute to the Zn(2+) site. Aspartate 118 (proton donor/acceptor) is an active-site residue. Histidine 167 is a Zn(2+) binding site. Catalysis depends on tyrosine 225, which acts as the Proton donor/acceptor.

It belongs to the aldolase class II family. AraD/FucA subfamily. The cofactor is Zn(2+).

The enzyme catalyses L-ribulose 5-phosphate = D-xylulose 5-phosphate. It functions in the pathway cofactor degradation; L-ascorbate degradation; D-xylulose 5-phosphate from L-ascorbate: step 4/4. Functionally, catalyzes the isomerization of L-ribulose 5-phosphate to D-xylulose 5-phosphate. Is involved in the anaerobic L-ascorbate utilization. The sequence is that of L-ribulose-5-phosphate 4-epimerase UlaF from Salmonella choleraesuis (strain SC-B67).